The primary structure comprises 185 residues: Ribosome-recycling factor (185 aa).

It belongs to the RRF family.

The protein resides in the cytoplasm. In terms of biological role, responsible for the release of ribosomes from messenger RNA at the termination of protein biosynthesis. May increase the efficiency of translation by recycling ribosomes from one round of translation to another. The sequence is that of Ribosome-recycling factor from Lactococcus lactis subsp. cremoris (strain SK11).